Reading from the N-terminus, the 277-residue chain is Large ribosomal subunit protein uL2 (277 aa).

Residues 219–277 (TVRGSVMNPNDHPHGGGEGRSPIGHPSPRTPWGKPALGYKTRKNKKYSDRFIVKRRHDK) form a disordered region.

The protein belongs to the universal ribosomal protein uL2 family. Part of the 50S ribosomal subunit. Forms a bridge to the 30S subunit in the 70S ribosome.

In terms of biological role, one of the primary rRNA binding proteins. Required for association of the 30S and 50S subunits to form the 70S ribosome, for tRNA binding and peptide bond formation. It has been suggested to have peptidyltransferase activity; this is somewhat controversial. Makes several contacts with the 16S rRNA in the 70S ribosome. In Clostridium botulinum (strain ATCC 19397 / Type A), this protein is Large ribosomal subunit protein uL2.